A 160-amino-acid polypeptide reads, in one-letter code: MNLKILGIDPGSRNCGYAIIEADKGKNILIEAGLIKIKPSTLQYQITELCEGLDLIFKNHSFDEVAIEDIFFAYNPKTVLKLAQFRGALSLKILQIHGDFAEYTPLQVKKAVTGKAKATKEQVAFMVKRLLGLSKDIKPLDITDAIAVALTHAANLRVRV.

Catalysis depends on residues Asp-9, Glu-68, and Asp-141. Positions 9, 68, and 141 each coordinate Mg(2+).

Belongs to the RuvC family. In terms of assembly, homodimer which binds Holliday junction (HJ) DNA. The HJ becomes 2-fold symmetrical on binding to RuvC with unstacked arms; it has a different conformation from HJ DNA in complex with RuvA. In the full resolvosome a probable DNA-RuvA(4)-RuvB(12)-RuvC(2) complex forms which resolves the HJ. It depends on Mg(2+) as a cofactor.

It localises to the cytoplasm. The enzyme catalyses Endonucleolytic cleavage at a junction such as a reciprocal single-stranded crossover between two homologous DNA duplexes (Holliday junction).. In terms of biological role, the RuvA-RuvB-RuvC complex processes Holliday junction (HJ) DNA during genetic recombination and DNA repair. Endonuclease that resolves HJ intermediates. Cleaves cruciform DNA by making single-stranded nicks across the HJ at symmetrical positions within the homologous arms, yielding a 5'-phosphate and a 3'-hydroxyl group; requires a central core of homology in the junction. The consensus cleavage sequence is 5'-(A/T)TT(C/G)-3'. Cleavage occurs on the 3'-side of the TT dinucleotide at the point of strand exchange. HJ branch migration catalyzed by RuvA-RuvB allows RuvC to scan DNA until it finds its consensus sequence, where it cleaves and resolves the cruciform DNA. This chain is Crossover junction endodeoxyribonuclease RuvC, found in Campylobacter jejuni subsp. jejuni serotype O:2 (strain ATCC 700819 / NCTC 11168).